Consider the following 309-residue polypeptide: Succinate--CoA ligase [ADP-forming] subunit alpha-2, mitochondrial (309 aa).

A hydrogenosome-targeting transit peptide spans 1–9; the sequence is MLSSSFERN. CoA is bound by residues Lys-54 and 107 to 109; that span reads ITE. Residue Tyr-171 participates in substrate binding. Residue His-262 is the Tele-phosphohistidine intermediate of the active site.

Belongs to the succinate/malate CoA ligase alpha subunit family. As to quaternary structure, heterodimer of an alpha and a beta subunit.

It localises to the hydrogenosome lumen. The catalysed reaction is succinate + ATP + CoA = succinyl-CoA + ADP + phosphate. It functions in the pathway carbohydrate metabolism; tricarboxylic acid cycle; succinate from succinyl-CoA (ligase route): step 1/1. In terms of biological role, succinyl-CoA synthetase functions in the citric acid cycle (TCA), coupling the hydrolysis of succinyl-CoA to the synthesis of ATP and thus represents the only step of substrate-level phosphorylation in the TCA. The alpha subunit of the enzyme binds the substrates coenzyme A and phosphate, while succinate binding and nucleotide specificity is provided by the beta subunit. The protein is Succinate--CoA ligase [ADP-forming] subunit alpha-2, mitochondrial (ALPHA-SCS2) of Trichomonas vaginalis.